A 156-amino-acid chain; its full sequence is Small ribosomal subunit protein uS7 (156 aa).

The protein belongs to the universal ribosomal protein uS7 family. In terms of assembly, part of the 30S ribosomal subunit. Contacts proteins S9 and S11.

In terms of biological role, one of the primary rRNA binding proteins, it binds directly to 16S rRNA where it nucleates assembly of the head domain of the 30S subunit. Is located at the subunit interface close to the decoding center, probably blocks exit of the E-site tRNA. The chain is Small ribosomal subunit protein uS7 from Rhizorhabdus wittichii (strain DSM 6014 / CCUG 31198 / JCM 15750 / NBRC 105917 / EY 4224 / RW1) (Sphingomonas wittichii).